Reading from the N-terminus, the 124-residue chain is Protein YebF (124 aa).

A signal peptide spans 1-27 (MKTCHIINRVGLSGVALLLTVSFTVSA). A YebF/Cmi domain is found at 36 to 123 (KFISCDNLTK…QQNTISYSEL (88 aa)). Cys-40 and Cys-113 are joined by a disulfide.

It belongs to the YebF family.

The protein resides in the secreted. In Photorhabdus laumondii subsp. laumondii (strain DSM 15139 / CIP 105565 / TT01) (Photorhabdus luminescens subsp. laumondii), this protein is Protein YebF.